Consider the following 153-residue polypeptide: Endoribonuclease YbeY (153 aa).

Zn(2+) contacts are provided by His-114, His-118, and His-124.

The protein belongs to the endoribonuclease YbeY family. It depends on Zn(2+) as a cofactor.

Its subcellular location is the cytoplasm. Single strand-specific metallo-endoribonuclease involved in late-stage 70S ribosome quality control and in maturation of the 3' terminus of the 16S rRNA. This chain is Endoribonuclease YbeY, found in Shewanella putrefaciens (strain CN-32 / ATCC BAA-453).